The sequence spans 620 residues: 1-deoxy-D-xylulose-5-phosphate synthase (620 aa).

Thiamine diphosphate contacts are provided by residues H80 and 121–123; that span reads GHS. Residue D152 participates in Mg(2+) binding. Residues 153 to 154, N181, Y288, and E370 each bind thiamine diphosphate; that span reads GA. Residue N181 coordinates Mg(2+).

This sequence belongs to the transketolase family. DXPS subfamily. In terms of assembly, homodimer. The cofactor is Mg(2+). Requires thiamine diphosphate as cofactor.

It carries out the reaction D-glyceraldehyde 3-phosphate + pyruvate + H(+) = 1-deoxy-D-xylulose 5-phosphate + CO2. The protein operates within metabolic intermediate biosynthesis; 1-deoxy-D-xylulose 5-phosphate biosynthesis; 1-deoxy-D-xylulose 5-phosphate from D-glyceraldehyde 3-phosphate and pyruvate: step 1/1. Functionally, catalyzes the acyloin condensation reaction between C atoms 2 and 3 of pyruvate and glyceraldehyde 3-phosphate to yield 1-deoxy-D-xylulose-5-phosphate (DXP). The polypeptide is 1-deoxy-D-xylulose-5-phosphate synthase (Escherichia coli (strain K12 / MC4100 / BW2952)).